The primary structure comprises 816 residues: Homeobox-leucine zipper protein ROC9 (816 aa).

A disordered region spans residues 26-104 (VFGRKNGPAA…RRKNYHRHTA (79 aa)). Residues 92–101 (KKRRRKNYHR) show a composition bias toward basic residues. The homeobox DNA-binding region spans 95–154 (RRKNYHRHTAEQIRIMEALFKESPHPDERQRQQVSKQLGLSARQVKFWFQNRRTQIKAVQ). A coiled-coil region spans residues 149-182 (QIKAVQERHENSLLKSELEKLQDEHRAMRELAKK). Residues 265–296 (KSAADGIASPPCSASAGAMQTNSRSPPLHDHD) form a disordered region. One can recognise an START domain in the interval 302 to 541 (HDDDKPRILE…LQLQCERMVF (240 aa)).

It belongs to the HD-ZIP homeobox family. Class IV subfamily.

The protein resides in the nucleus. Probable transcription factor. The polypeptide is Homeobox-leucine zipper protein ROC9 (ROC9) (Oryza sativa subsp. japonica (Rice)).